A 378-amino-acid polypeptide reads, in one-letter code: Alpha-(1,3)-fucosyltransferase fut-5 (378 aa).

The Cytoplasmic portion of the chain corresponds to 1 to 7 (MKHNTLR). Residues 8–28 (AVFQFSFFIGICTFIMIAGYS) traverse the membrane as a helical; Signal-anchor for type II membrane protein segment. The Lumenal portion of the chain corresponds to 29–378 (YQINYNQRMG…CDNSFATRFL (350 aa)). Residues Asn44, Asn88, Asn105, Asn143, Asn171, and Asn307 are each glycosylated (N-linked (GlcNAc...) asparagine).

The protein belongs to the glycosyltransferase 10 family. Ca(2+) serves as cofactor. In terms of processing, N-glycosylated.

It localises to the golgi apparatus. The protein localises to the golgi stack membrane. It carries out the reaction a beta-D-galactosyl-(1-&gt;3)-N-acetyl-beta-D-glucosaminyl derivative + GDP-beta-L-fucose = a beta-D-galactosyl-(1-&gt;3)-[alpha-L-fucosyl-(1-&gt;4)]-N-acetyl-beta-D-glucosaminyl derivative + GDP + H(+). It functions in the pathway protein modification; protein glycosylation. Inhibited by Cu(2+) and Ni(2+), and to a lesser extent by EDTA, Mn(2+) and Mg(2+). Catalyzes the addition of fucose in alpha 1-3 linkage to GalNAc-beta-1-&gt;4-GlcNAc-beta-1-&gt;3-Gal-beta-1-&gt;4-Glc (LDNT)acceptor. Unlike fut-1, does not add fucose to Man-alpha-1-&gt;3-(Man-alpha-1-&gt;6)-Man-beta-1-&gt;4-GlcNAc-beta-1-&gt;4-GlcNAc-beta-1-Asn (M3), Man-alpha-1-&gt;3-(Man-alpha-1-&gt;6)-Man-beta-1-&gt;4-GlcNAc-beta-1-&gt;4-(Fuc-alpha-1-&gt;6)-GlcNAc-beta-1-Asn (M3F6) or GlcNAc-beta-1-&gt;2-Man-alpha-1-&gt;3-(GlcNAc-beta-1-&gt;2-Man-alpha-1-&gt;6)-Man-beta-1-4-GlcNAc-beta-1-&gt;4-(Fuc-alpha-1-&gt;6)-GlcNAc-beta-1-Asn (GnM3F6) acceptors. The sequence is that of Alpha-(1,3)-fucosyltransferase fut-5 from Caenorhabditis elegans.